A 334-amino-acid chain; its full sequence is Transcription initiation factor IIB (334 aa).

The segment at 34–65 (TETVCPECGGRQLVHDYERAELVCQSCGLVID) adopts a TFIIB-type zinc-finger fold. Residues C38, C41, C57, and C60 each contribute to the Zn(2+) site. Repeat copies occupy residues 151–234 (SELD…SREL) and 245–326 (DYVP…ELAE).

It belongs to the TFIIB family.

Functionally, stabilizes TBP binding to an archaeal box-A promoter. Also responsible for recruiting RNA polymerase II to the pre-initiation complex (DNA-TBP-TFIIB). The polypeptide is Transcription initiation factor IIB (Methanoregula boonei (strain DSM 21154 / JCM 14090 / 6A8)).